We begin with the raw amino-acid sequence, 381 residues long: Cytochrome b (381 aa).

Transmembrane regions (helical) follow at residues 34–54 (FGSLLGLCLIIQILTGLFLAM), 78–99 (WLIRNIHANGASLFFICVYLHI), 114–134 (WNIGVILLFLLMATAFVGYVL), and 179–199 (FFAFHFLLPFLIVGLTLIHLL). Heme b is bound by residues His-84 and His-98. 2 residues coordinate heme b: His-183 and His-197. His-202 contacts a ubiquinone. 4 helical membrane-spanning segments follow: residues 227–247 (YKDLLGFFLMIILLALLALFL), 289–309 (LGGVLALLFSIFILMLIPMLH), 321–341 (MTQFLFWTLVANAIILTWIGG), and 348–368 (FILVGQIASVTYFSLFLIIIP).

The protein belongs to the cytochrome b family. As to quaternary structure, the cytochrome bc1 complex contains 3 respiratory subunits (MT-CYB, CYC1 and UQCRFS1), 2 core proteins (UQCRC1 and UQCRC2) and probably 6 low-molecular weight proteins. Requires heme b as cofactor.

Its subcellular location is the mitochondrion inner membrane. In terms of biological role, component of the ubiquinol-cytochrome c reductase complex (complex III or cytochrome b-c1 complex) that is part of the mitochondrial respiratory chain. The b-c1 complex mediates electron transfer from ubiquinol to cytochrome c. Contributes to the generation of a proton gradient across the mitochondrial membrane that is then used for ATP synthesis. The polypeptide is Cytochrome b (mt-cyb) (Squalus acanthias (Spiny dogfish)).